A 2287-amino-acid polypeptide reads, in one-letter code: MDNPRVKYLEELILALKSAGTVGNGIELDSTLQLDEKNGKLLQTLLKNTQSTNTDEVIFHKSFQALDLFLRCNQHLFSANVKEITMIEVILNNMVSCSLMHWSNMQYIWLINKYVSAWLKAYSFASTSNLQIWFTEQMVQYEKLLVTCLRGKLEKPTFHSLLKKIVIVNGWIMRDGLLRNYSYRRWQSQFQKLMRLLAFVLKSTNEPSVEVASILQLLVRYISLSKESLSIFRFSFDLIQTLIKDHHQHISPTILAKTLLRTLYLCIHDESKLAEIKNTFELHEWINTNKNADPLFIRSIKYVSVKLGFLESMEEFTFSNKQLHWLHQAIENPKLRLVSGNVRNCIADSADIRSFYDKVKESLLNTIKDGDTAKLTHSMHSIRQLAIKEKFVNNNLVRSPQVEFNASQNMRLSSLNLVPLHKSLAFQLLAKHVIKSIPITDMPEAMLTGVVLILIEVFSRFEPPKLEETSDLIQQSDGYGCLQVFQRASNSRSRFLRLLSVRLLPYFASLGSKYEDINLKFLIIFLQKPKAPYLTETLHMSWINLIINCNSEYFDDLLLKLIDLFNSSDFAEHTMMAAQLRYLSKIQGKSPYQLLSPILPVLFKKMGRSLVEKKLGLQRIVQLVDYPAKTLLENFQRYVVPSALGQYKSDVITEVARIMSGNDKSLVEEKKLKLLDRNSRQIFAVALVKHGFFSIETIQTLFLNTAPKFRKNYITLYLPDYKTLAEVLKMSKQILTLDGQITETERCVLSSLRFLLITNFSKDKRRGTRFKNIEDWNEEMEEQFQQKLEQNVLGIFQVFSNDMHDSDGKTSYYEKLRVLNGISFLMKYASKKSIISALAQLSICLQTGSEIPEIQHNTLECWHLLIKLLNEEQITAIINDLFCLILQKWSTFSSSCKLECQAIFDTLLKDRQKLVLEGRPFILLAFLNNPEFQVLERHPTVARKVLKVISTTNWLKVFTENLGSNNRYVILQTLLELEKYFSTTIHRKHVDVVTKHDDSSHLSTLLGALLDSTYKFRNRDLKICQIAASCISLIGLLDVTKHALPRNTNLSEEICDFNNHSQTVKFLISIVNNILVPAFWQSENPTKQLFVALVMQESLKYCGLSSVNWDINRPDDYPVEAKLWSRFNDISKTTLFPLLSSLYLAQSWKEYVPLSYPSFKVKDGYQVWIRNLTLDLLKIGTEEDHPLHVFSSLIREDDGTLSNFLLPFITMDIILRANKHNEYSKIIENLSIEFEFIFNFDLQQLNHFQIDSLKMAYNTIFRVYEYCKKWVSSFKQDYQAANGTYMIQEDKVLQVLDRTERFVNTIPSDTLAKKSLETDSFERSALYLEQSYREHGTSSLASTDLLQCIQNTYAEIGDVDAVGGVLKMFSTGNLTTKIEELQYSKNWKMAQDCFEALGDFKLSANSTTSSELVKSSNMKMLKSMYSHQLYEELLMKVKVHLPETKGFLVDNDGDLLNMGIEAVSQTGNIVELTRWIERVEHIQMFNDPSLLLHYNIAKVLQAVSRNQQQNVERYINKCFTLIGAQFTIPSTSTTLLKNREVLQKLHALTDIKLLCSAHTQSEFSNASKALDGRLSHVGSDFSPNHYLLSIRKTVEIISKNQHLQNDISNVYFQLSQLDRKENRLDLAAEDLMNALKYNHHSAELEFAEILWKQGEKDMALKTVAEITKRFKDDPSTASSENQDFKEVLLKYTEWLDLSNSSVSEQIIKQYNELIRFDKNWDAPFYSMGLYYSKLLEKKKAEGYVSDGSLEYRSITNFLTSFEKGSPNIRQSLPKVVTLWLDTAKNDVNNSISDVSNYSSRICNKIDTAVKNCGIHIWYTVLTQLLSRLMHPHTATIHTIVNILFHMTLEYPSVMLWYISILLNSESLERRNIGKQIVEAFQKKNPRTKLPGTAISLVQSLTRVCIKDVKNTASRSGRSIDSDFKFNLELAPNDMCVPVNINLKKLLPSTATSMNSDLFKSVMVSIARFSSQYMVFNSLKKPKKLTVIGSDGNIYGIMCKKEDVRQDNQYMQFANTMSFLLSKDVESRKRNLGITTYGVLSLREDCGLLEIVPNVVTLRSLLSMKYESMKIKYSLKSLQEKWQSIPSDQKLAFHKDCLKKFPPVLYQWFLDNFPDPITWYNARNGFVRSYSVMAMVGHILGLGDRHCENILLDVLTGRVLHVDFDCLFEKGKKLPVPEIVPFRLTQNITDAFGIIGTEGTFKKSSEVTLRVMRNNEIGLVNIIETIMYDRKIDESIQNALKVLRDKIRGIDARDGLALSVSGQVEALTQESCSVENLSKMYIGWLPFW.

An FAT domain is found at 1310-1864 (TLAKKSLETD…LWYISILLNS (555 aa)). The region spanning 1968–2271 (FSSQYMVFNS…QVEALTQESC (304 aa)) is the PI3K/PI4K catalytic domain. The tract at residues 1974–1980 (VFNSLKK) is G-loop. A catalytic loop region spans residues 2140–2148 (GLGDRHCEN). Residues 2160–2184 (HVDFDCLFEKGKKLPVPEIVPFRLT) form an activation loop region. In terms of domain architecture, FATC spans 2255 to 2287 (LALSVSGQVEALTQESCSVENLSKMYIGWLPFW).

The protein belongs to the PI3/PI4-kinase family. ATM subfamily.

Its subcellular location is the nucleus. It catalyses the reaction L-seryl-[protein] + ATP = O-phospho-L-seryl-[protein] + ADP + H(+). The catalysed reaction is L-threonyl-[protein] + ATP = O-phospho-L-threonyl-[protein] + ADP + H(+). Functionally, serine/threonine protein kinase which activates checkpoint signaling upon genotoxic stresses such as ionizing radiation (IR), ultraviolet light (UV), or DNA replication stalling, thereby acting as a DNA damage sensor. Recognizes the substrate consensus sequence [ST]-Q. Recruited to DNA lesions in order to initiate the DNA repair by homologous recombination. Phosphorylates histone H2A to form H2AS128ph (gamma-H2A) at sites of DNA damage, also involved in the regulation of DNA damage response mechanism. Required for cell growth and meiotic recombination. The polypeptide is Serine/threonine-protein kinase MEC1 (MEC1) (Kluyveromyces lactis (strain ATCC 8585 / CBS 2359 / DSM 70799 / NBRC 1267 / NRRL Y-1140 / WM37) (Yeast)).